A 505-amino-acid polypeptide reads, in one-letter code: Lysine--tRNA ligase (505 aa).

Positions 415 and 422 each coordinate Mg(2+).

Belongs to the class-II aminoacyl-tRNA synthetase family. Homodimer. Mg(2+) is required as a cofactor.

The protein localises to the cytoplasm. It catalyses the reaction tRNA(Lys) + L-lysine + ATP = L-lysyl-tRNA(Lys) + AMP + diphosphate. This chain is Lysine--tRNA ligase, found in Pectobacterium carotovorum subsp. carotovorum (strain PC1).